The sequence spans 332 residues: DNA-directed RNA polymerase subunit alpha (332 aa).

An alpha N-terminal domain (alpha-NTD) region spans residues M1–L230. Residues E246–S332 form an alpha C-terminal domain (alpha-CTD) region.

This sequence belongs to the RNA polymerase alpha chain family. In terms of assembly, homodimer. The RNAP catalytic core consists of 2 alpha, 1 beta, 1 beta' and 1 omega subunit. When a sigma factor is associated with the core the holoenzyme is formed, which can initiate transcription.

The catalysed reaction is RNA(n) + a ribonucleoside 5'-triphosphate = RNA(n+1) + diphosphate. Functionally, DNA-dependent RNA polymerase catalyzes the transcription of DNA into RNA using the four ribonucleoside triphosphates as substrates. This Campylobacter fetus subsp. fetus (strain 82-40) protein is DNA-directed RNA polymerase subunit alpha.